Reading from the N-terminus, the 629-residue chain is DNA-directed RNA polymerase III subunit rpc3 (629 aa).

3 disordered regions span residues 136–164 (ANGV…SNEQ), 247–294 (PRGA…EMGY), and 373–420 (QLDL…SGGN). The span at 257–268 (RRADEPNKKCRT) shows a compositional bias: basic and acidic residues. Positions 272 to 293 (SVDENDEHDEEEENEWSDDEMG) are enriched in acidic residues. Polar residues predominate over residues 374-388 (LDLSSSTGPMDSSQP). Residues 389–409 (DGRRGKRPWDGDVEGTNHEEA) show a composition bias toward basic and acidic residues. The tract at residues 556-577 (TYKAMSRCLQRLRFERSRIKDF) is leucine-zipper.

Belongs to the RNA polymerase beta chain family. In terms of assembly, component of the RNA polymerase III (Pol III) complex consisting of 17 subunits.

It localises to the nucleus. DNA-dependent RNA polymerase catalyzes the transcription of DNA into RNA using the four ribonucleoside triphosphates as substrates. Specific core component of RNA polymerase III which synthesizes small RNAs, such as 5S rRNA and tRNAs. The sequence is that of DNA-directed RNA polymerase III subunit rpc3 (rpc82) from Aspergillus fumigatus (strain ATCC MYA-4609 / CBS 101355 / FGSC A1100 / Af293) (Neosartorya fumigata).